A 135-amino-acid polypeptide reads, in one-letter code: MVYECQTGVQIEAALMFVLPGYDAFLGFLLIAAAVPVLALVTNKLLAPRSQTGERELTYESGMEPIGGAWIQFNIRYYMFALVFVIFDVETVFLYPWAVAFHRLGLLAFIEALVFITILLVALAYAWRKGALEWS.

The next 3 helical transmembrane spans lie at 15 to 35 (LMFV…AAAV), 79 to 99 (MFAL…PWAV), and 104 to 124 (LGLL…VALA).

It belongs to the complex I subunit 3 family. In terms of assembly, NDH-1 can be composed of about 15 different subunits; different subcomplexes with different compositions have been identified which probably have different functions.

The protein resides in the cellular thylakoid membrane. It carries out the reaction a plastoquinone + NADH + (n+1) H(+)(in) = a plastoquinol + NAD(+) + n H(+)(out). It catalyses the reaction a plastoquinone + NADPH + (n+1) H(+)(in) = a plastoquinol + NADP(+) + n H(+)(out). In terms of biological role, NDH-1 shuttles electrons from an unknown electron donor, via FMN and iron-sulfur (Fe-S) centers, to quinones in the respiratory and/or the photosynthetic chain. The immediate electron acceptor for the enzyme in this species is believed to be plastoquinone. Couples the redox reaction to proton translocation, and thus conserves the redox energy in a proton gradient. Cyanobacterial NDH-1 also plays a role in inorganic carbon-concentration. This chain is NAD(P)H-quinone oxidoreductase subunit 3, found in Synechococcus sp. (strain CC9311).